A 213-amino-acid chain; its full sequence is ATP phosphoribosyltransferase (213 aa).

The protein belongs to the ATP phosphoribosyltransferase family. Short subfamily. Heteromultimer composed of HisG and HisZ subunits.

It is found in the cytoplasm. It catalyses the reaction 1-(5-phospho-beta-D-ribosyl)-ATP + diphosphate = 5-phospho-alpha-D-ribose 1-diphosphate + ATP. It participates in amino-acid biosynthesis; L-histidine biosynthesis; L-histidine from 5-phospho-alpha-D-ribose 1-diphosphate: step 1/9. Catalyzes the condensation of ATP and 5-phosphoribose 1-diphosphate to form N'-(5'-phosphoribosyl)-ATP (PR-ATP). Has a crucial role in the pathway because the rate of histidine biosynthesis seems to be controlled primarily by regulation of HisG enzymatic activity. The chain is ATP phosphoribosyltransferase from Listeria welshimeri serovar 6b (strain ATCC 35897 / DSM 20650 / CCUG 15529 / CIP 8149 / NCTC 11857 / SLCC 5334 / V8).